A 269-amino-acid polypeptide reads, in one-letter code: Expansin-B1 (269 aa).

A signal peptide spans methionine 1 to cysteine 24. Asparagine 34 is a glycosylation site (N-linked (GlcNAc...) asparagine). An Expansin-like EG45 domain is found at glycine 63–glycine 169. Intrachain disulfides connect cysteine 66–cysteine 94, cysteine 97–cysteine 164, and cysteine 102–cysteine 108. The 82-residue stretch at asparagine 183–serine 264 folds into the Expansin-like CBD domain.

Belongs to the expansin family. Expansin B subfamily. As to expression, expressed in anthers and pollen.

The protein resides in the secreted. It is found in the cell wall. The protein localises to the membrane. In terms of biological role, may aid fertilization by loosening the cell wall of the stigma and style, thereby facilitating penetration of the pollen tube. Acts selectively on grass cell walls, which are relatively poor in pectins and xyloglucans and rich in glucuronoarabinoxylans and (1-3),(1-4)-beta-D-glucans, when compared with cell walls of other angiosperms, including other monocots. The protein is Expansin-B1 (EXPB1) of Zea mays (Maize).